Consider the following 884-residue polypeptide: Androgen receptor (884 aa).

The segment at 1 to 522 (MEVQLGLGRV…PIDYYFPPQK (522 aa)) is modulating. Positions 1–551 (MEVQLGLGRV…GSCKVFFKRA (551 aa)) are interaction with ZNF318. 2 disordered regions span residues 33-145 (VIQN…TLSL) and 174-207 (QQQQ…YLGG). Composition is skewed to low complexity over residues 55-79 (QQQQ…PQAQ) and 174-196 (QQQQ…AAGA). Residue Ser61 is modified to Phosphoserine; by CDK9. Ser75 is subject to Phosphoserine. Residues 197–207 (PTSSKDSYLGG) are compositionally biased toward polar residues. Tyr204 carries the post-translational modification Phosphotyrosine; by CSK. Ser237 is modified (phosphoserine). Tyr248 carries the post-translational modification Phosphotyrosine; by CSK and TNK2. The interval 275-294 (DDSADKGTEEPAEYTPFKGS) is disordered. 4 positions are modified to phosphotyrosine; by CSK: Tyr288, Tyr327, Tyr338, and Tyr343. Tyr344 carries the post-translational modification Phosphotyrosine; by CSK and TNK2. A Glycyl lysine isopeptide (Lys-Gly) (interchain with G-Cter in SUMO) cross-link involves residue Lys367. Tyr374 is subject to Phosphotyrosine; by CSK. Lys485 participates in a covalent cross-link: Glycyl lysine isopeptide (Lys-Gly) (interchain with G-Cter in SUMO). Residues Tyr499 and Tyr516 each carry the phosphotyrosine; by CSK modification. The segment at 516–883 (YYFPPQKTCL…GKVKPIYFHT (368 aa)) is interaction with LPXN. A DNA-binding region (nuclear receptor) is located at residues 523 to 596 (TCLICGDEAS…AGMTLGARKL (74 aa)). 2 NR C4-type zinc fingers span residues 524 to 544 (CLIC…CGSC) and 560 to 584 (CASR…LRKC). The interaction with HIPK3 stretch occupies residues 536 to 626 (YGALTCGSCK…TEESSQKLTV (91 aa)). The tract at residues 556 to 883 (QKYLCASRND…GKVKPIYFHT (328 aa)) is interaction with CCAR1. The tract at residues 589-883 (MTLGARKLKK…GKVKPIYFHT (295 aa)) is interaction with KAT7. A Phosphoserine; by STK4/MST1 modification is found at Ser615. In terms of domain architecture, NR LBD spans 633–864 (ECQPIFLNVL…DFPEMMAEII (232 aa)). 17beta-hydroxy-5alpha-androstan-3-one-binding residues include Asn670 and Arg717. Glycyl lysine isopeptide (Lys-Gly) (interchain with G-Cter in ubiquitin) cross-links involve residues Lys810 and Lys812. Thr842 provides a ligand contact to 17beta-hydroxy-5alpha-androstan-3-one. Tyr880 bears the Phosphotyrosine; by CSK mark.

Belongs to the nuclear hormone receptor family. NR3 subfamily. In terms of assembly, binds DNA as a homodimer. Part of a ternary complex containing AR, EFCAB6/DJBP and PARK7. Interacts with HIPK3 and NR0B2 in the presence of androgen. The ligand binding domain interacts with KAT7/HBO1 in the presence of dihydrotestosterone. Interacts with EFCAB6/DJBP, PQBP1, RANBP9, RBAK, SPDEF, SRA1, TGFB1I1 and RREB1. Interacts with ZMIZ1/ZIMP10 and ZMIZ2/ZMIP7 which both enhance its transactivation activity. Interacts with SLC30A9 and RAD54L2/ARIP4. Interacts with MACROD1 (via macro domain). Interacts via the ligand-binding domain with LXXLL and FXXLF motifs from NCOA1, NCOA2, NCOA3 and MAGEA11. Interacts (via nuclear receptor DNA binding domain and nuclear receptor ligand binding domain) with NCOA4. The AR N-terminal poly-Gln region binds Ran resulting in enhancement of AR-mediated transactivation. Ran-binding decreases as the poly-Gln length increases. Interacts with HIP1 (via coiled coil domain). Interacts (via ligand-binding domain) with TRIM68. Interacts with TNK2. Interacts with USP26. Interacts with RNF6. Interacts (regulated by RNF6 probably through polyubiquitination) with RNF14; regulates AR transcriptional activity. Interacts with PRMT2 and TRIM24. Interacts with RACK1. Interacts with RANBP10; this interaction enhances dihydrotestosterone-induced AR transcriptional activity. Interacts with PRPF6 in a hormone-independent way; this interaction enhances dihydrotestosterone-induced AR transcriptional activity. Interacts with STK4/MST1. Interacts with ZIPK/DAPK3. Interacts with LPXN. Interacts with MAK. Part of a complex containing AR, MAK and NCOA3. Interacts with CRY1. Interacts with CCAR1 and GATA2. Interacts with ZNF318. Interacts with BUD31. Interacts with ARID4A. Interacts with ARID4B. Interacts (via NR LBD domain) with ZBTB7A; the interaction is direct and androgen-dependent. Interacts with NCOR1. Interacts with NCOR2. Interacts with CRY2 in a ligand-dependent manner. Post-translationally, phosphorylated in prostate cancer cells in response to several growth factors including EGF. Phosphorylation is induced by c-Src kinase (CSK). Tyr-499 is one of the major phosphorylation sites and an increase in phosphorylation and Src kinase activity is associated with prostate cancer progression. Phosphorylation by TNK2 enhances the DNA-binding and transcriptional activity. Phosphorylation at Ser-61 by CDK9 regulates AR promoter selectivity and cell growth. Sumoylated on Lys-367 (major) and Lys-485. Ubiquitinated. Deubiquitinated by USP26. 'Lys-6' and 'Lys-27'-linked polyubiquitination by RNF6 modulates AR transcriptional activity and specificity. In terms of processing, palmitoylated by ZDHHC7 and ZDHHC21. Palmitoylation is required for plasma membrane targeting and for rapid intracellular signaling via ERK and AKT kinases and cAMP generation.

The protein localises to the nucleus. It localises to the cytoplasm. In terms of biological role, steroid hormone receptors are ligand-activated transcription factors that regulate eukaryotic gene expression and affect cellular proliferation and differentiation in target tissues. Transcription factor activity is modulated by bound coactivator and corepressor proteins like ZBTB7A that recruits NCOR1 and NCOR2 to the androgen response elements/ARE on target genes, negatively regulating androgen receptor signaling and androgen-induced cell proliferation. Transcription activation is also down-regulated by NR0B2. Activated, but not phosphorylated, by HIPK3 and ZIPK/DAPK3. This is Androgen receptor (AR) from Eulemur fulvus collaris (Collared brown lemur).